Consider the following 331-residue polypeptide: Thiamine-monophosphate kinase (331 aa).

Residues aspartate 43, threonine 59, threonine 60, and aspartate 61 each coordinate Mg(2+). A substrate-binding site is contributed by histidine 68. Mg(2+) is bound by residues aspartate 90, aspartate 138, and aspartate 231. Residue 137-138 participates in ATP binding; sequence GD. Serine 233 lines the ATP pocket. Aspartate 234 serves as a coordination point for Mg(2+). Substrate is bound by residues glutamate 284 and tryptophan 328.

It belongs to the thiamine-monophosphate kinase family.

The enzyme catalyses thiamine phosphate + ATP = thiamine diphosphate + ADP. It participates in cofactor biosynthesis; thiamine diphosphate biosynthesis; thiamine diphosphate from thiamine phosphate: step 1/1. Catalyzes the ATP-dependent phosphorylation of thiamine-monophosphate (TMP) to form thiamine-pyrophosphate (TPP), the active form of vitamin B1. This chain is Thiamine-monophosphate kinase, found in Corynebacterium glutamicum (strain ATCC 13032 / DSM 20300 / JCM 1318 / BCRC 11384 / CCUG 27702 / LMG 3730 / NBRC 12168 / NCIMB 10025 / NRRL B-2784 / 534).